The following is a 642-amino-acid chain: Bifunctional protein glk (642 aa).

Residues 1–340 are glucokinase; that stretch reads MSTGAQSKAA…QLSNRSGGAS (340 aa). Residue 23–28 coordinates ATP; the sequence is ADVGGT. The region spanning 341-417 is the HTH rpiR-type domain; the sequence is SAVFERIRQM…LKLATGLTGT (77 aa). Residues 341–642 form a putative HTH-type transcriptional regulator region; the sequence is SAVFERIRQM…SPAAKDVARD (302 aa). Positions 377–396 form a DNA-binding region, H-T-H motif; the sequence is IVDIARKADVSQPTVIRFCR. Positions 461–600 constitute an SIS domain; that stretch reads AIEILNGARR…AVGVAIRRAS (140 aa). A helical transmembrane segment spans residues 576–596; sequence SMISRILHLLMIDILAVGVAI.

It in the N-terminal section; belongs to the bacterial glucokinase family.

The protein resides in the membrane. The enzyme catalyses D-glucose + ATP = D-glucose 6-phosphate + ADP + H(+). This Burkholderia lata (strain ATCC 17760 / DSM 23089 / LMG 22485 / NCIMB 9086 / R18194 / 383) protein is Bifunctional protein glk (glk).